The primary structure comprises 283 residues: Pantothenate synthetase (283 aa).

Position 30–37 (30–37 (MGNLHDGH)) interacts with ATP. Residue H37 is the Proton donor of the active site. Q61 contributes to the (R)-pantoate binding site. Q61 is a beta-alanine binding site. Residue 149 to 152 (GEKD) participates in ATP binding. Q155 contacts (R)-pantoate. Position 186-189 (186-189 (LSSR)) interacts with ATP.

The protein belongs to the pantothenate synthetase family. In terms of assembly, homodimer.

Its subcellular location is the cytoplasm. The catalysed reaction is (R)-pantoate + beta-alanine + ATP = (R)-pantothenate + AMP + diphosphate + H(+). Its pathway is cofactor biosynthesis; (R)-pantothenate biosynthesis; (R)-pantothenate from (R)-pantoate and beta-alanine: step 1/1. Its function is as follows. Catalyzes the condensation of pantoate with beta-alanine in an ATP-dependent reaction via a pantoyl-adenylate intermediate. The chain is Pantothenate synthetase from Shigella dysenteriae serotype 1 (strain Sd197).